A 144-amino-acid chain; its full sequence is Large ribosomal subunit protein uL15 (144 aa).

Residues 1–10 are compositionally biased toward basic and acidic residues; that stretch reads MKLHELKPAE. Positions 1 to 52 are disordered; that stretch reads MKLHELKPAEGSRQVRNRVGRGTSSGNGKTAGRGQKGQKARGKVRLGFEGGQ. Residues 23 to 35 show a composition bias toward gly residues; the sequence is TSSGNGKTAGRGQ.

Belongs to the universal ribosomal protein uL15 family. In terms of assembly, part of the 50S ribosomal subunit.

In terms of biological role, binds to the 23S rRNA. The chain is Large ribosomal subunit protein uL15 from Ligilactobacillus salivarius (strain UCC118) (Lactobacillus salivarius).